The following is a 160-amino-acid chain: uncharacterized protein (160 aa).

The region spanning 7–151 (LLINFKTLEE…NPYIWHPDMD (145 aa)) is the N-acetyltransferase domain.

This is an uncharacterized protein from Bacillus velezensis (strain DSM 23117 / BGSC 10A6 / LMG 26770 / FZB42) (Bacillus amyloliquefaciens subsp. plantarum).